A 179-amino-acid polypeptide reads, in one-letter code: HTH-type transcriptional regulator AldR (179 aa).

The 62-residue stretch at 32–93 folds into the HTH asnC-type domain; it reads LDEVDRRILS…DIDPVAVGLP (62 aa). Residues 51–70 constitute a DNA-binding region (H-T-H motif); it reads NNALADTVGIAPSTCHGRVR.

In terms of assembly, homooctamer. Homotetramer. Tetramer of dimers. The N-terminal DNA-binding domains are swapped, forming a dimer, and four dimers are assembled into an octamer through crystal symmetry.

Its activity is regulated as follows. The DNA-binding activity of AldR is modulated by interaction of AldR with various amino acids. Alanine, tryptophan, tyrosine and aspartate completely abolish the DNA binding ability of AldR. On the other hand, glutamate and asparagine reduce AldR binding to DNA but do not completely abolish it. Binding of amino acids can lead to structural modifications and changes in oligomeric association. Activity is also inhibited by 3 small molecule inhibitors, tetrahydroquinoline carbonitrile derivative (S010-0261), levothyroxine and liothyronine, which can disrupt the AldR-DNA complex. Transcriptional regulator that might play a role under hypoxic conditions. Regulates the expression of ald, which encodes L-alanine dehydrogenase. Serves as both an activator for ald expression in the presence of L-alanine and a repressor in the absence of L-alanine. Acts by binding directly to the upstream region of the ald gene. Four AldR-binding sites (O2, O1, O4 and O3) were identified upstream of the ald gene. O2, O1 and O4 are required for the induction of ald expression by alanine, while O3 is directly involved in the repression of ald expression, by occluding the access of RNA polymerase to the ald promoter. In addition to O3, both O1 and O4 are also necessary for full repression of ald expression in the absence of alanine. This Mycobacterium tuberculosis (strain ATCC 25618 / H37Rv) protein is HTH-type transcriptional regulator AldR.